A 140-amino-acid chain; its full sequence is ATP synthase epsilon chain (140 aa).

This sequence belongs to the ATPase epsilon chain family. F-type ATPases have 2 components, CF(1) - the catalytic core - and CF(0) - the membrane proton channel. CF(1) has five subunits: alpha(3), beta(3), gamma(1), delta(1), epsilon(1). CF(0) has three main subunits: a, b and c.

Its subcellular location is the cell inner membrane. In terms of biological role, produces ATP from ADP in the presence of a proton gradient across the membrane. This is ATP synthase epsilon chain from Pseudoalteromonas translucida (strain TAC 125).